The sequence spans 146 residues: Probable NADH dehydrogenase [ubiquinone] 1 alpha subcomplex subunit 12 (146 aa).

Belongs to the complex I NDUFA12 subunit family. In terms of assembly, complex I is composed of 45 different subunits.

Its subcellular location is the mitochondrion inner membrane. Accessory subunit of the mitochondrial membrane respiratory chain NADH dehydrogenase (Complex I), that is believed not to be involved in catalysis. Complex I functions in the transfer of electrons from NADH to the respiratory chain. The immediate electron acceptor for the enzyme is believed to be ubiquinone. The protein is Probable NADH dehydrogenase [ubiquinone] 1 alpha subcomplex subunit 12 of Caenorhabditis elegans.